The primary structure comprises 356 residues: TPR repeat-containing protein P27G11.02 (356 aa).

The N-terminal 20 residues, 1–20, are a transit peptide targeting the mitochondrion; that stretch reads MRMQWIWKSRRSLQNVFIRR. 2 TPR repeats span residues 194 to 227 and 290 to 323; these read SRLF…TMAN and AAAF…RKDD.

It localises to the mitochondrion. The protein is TPR repeat-containing protein P27G11.02 of Schizosaccharomyces pombe (strain 972 / ATCC 24843) (Fission yeast).